Here is a 38-residue protein sequence, read N- to C-terminus: Putative ORF10 protein (38 aa).

Binds host ZYG11B. This would not play any role in SARS-CoV-2 infection.

The polypeptide is Putative ORF10 protein (Severe acute respiratory syndrome coronavirus 2 (2019-nCoV)).